Here is a 152-residue protein sequence, read N- to C-terminus: Transcription elongation factor Spt5 (152 aa).

Residues 99–128 form the KOW domain; it reads PGDVVEVISGPFRGTQAQVIRVEEAKGEVV.

It belongs to the archaeal Spt5 family. As to quaternary structure, heterodimer composed of Spt4 and Spt5. Interacts with RNA polymerase (RNAP).

In terms of biological role, stimulates transcription elongation. In Saccharolobus solfataricus (strain ATCC 35092 / DSM 1617 / JCM 11322 / P2) (Sulfolobus solfataricus), this protein is Transcription elongation factor Spt5.